The following is a 423-amino-acid chain: MYRSCVVRARKRTCVEPWVIGIISFLSLIVLAVCIGLTVHYVRYNHRRTYNYYSTLSFTSDKLYSEFGREASKNFTEMSQRIETMVKHAFHKSPLRGQLVKAHIIKFSKEDDGVLAHMLLIFRIRSTEDPETVHKIIEYVLHEKLKYATGPPNVDPESVKIKKINKTESDNYFNHCCGTRRNKSTVQTSVRIVGGTPVEEEEWPWQSSLRWDGSHRCGATLINNTWLVTAAHCFRTHKDPSRWSATFGATLQPRKLTTGIRRIIVHEKYKYPSHDYDIALAELSKPVPCTNAVHKVCLPDANHEFQPGQRMFVTGFGALKNDGFTQNNLRQVQVDYIDTQTCNQPQSYNGAITPRMLCAGFLKGEKDACQGDSGGPLVTADVRDIWYLAGVVSWGDECGQPNKPGVYTRVTAFRHWIASNTGI.

Over 1-18 (MYRSCVVRARKRTCVEPW) the chain is Cytoplasmic. The helical; Signal-anchor for type II membrane protein transmembrane segment at 19–39 (VIGIISFLSLIVLAVCIGLTV) threads the bilayer. The Extracellular portion of the chain corresponds to 40-423 (HYVRYNHRRT…RHWIASNTGI (384 aa)). Residues 48–166 (RTYNYYSTLS…ESVKIKKINK (119 aa)) form the SEA domain. Asn74, Asn165, Asn182, and Asn223 each carry an N-linked (GlcNAc...) asparagine glycan. Disulfide bonds link Cys176/Cys297, Cys217/Cys233, Cys342/Cys358, and Cys369/Cys398. One can recognise a Peptidase S1 domain in the interval 192 to 422 (IVGGTPVEEE…FRHWIASNTG (231 aa)). Active-site charge relay system residues include His232 and Asp277. Ser373 serves as the catalytic Charge relay system.

The protein belongs to the peptidase S1 family. As to quaternary structure, forms a heterodimer with SERPINA5 and SERPINE1. Post-translationally, N-glycosylated. Expressed in epidermal, oral and male reproductive tissues.

It localises to the cell membrane. The protein resides in the secreted. With respect to regulation, inhibited by SERPINA5. Its function is as follows. Serine protease which possesses both gelatinolytic and caseinolytic activities. Shows a preference for Arg in the P1 position. In Mus musculus (Mouse), this protein is Transmembrane protease serine 11E (Tmprss11e).